The primary structure comprises 512 residues: Intermediate filament family orphan 2 (512 aa).

An IF rod domain is found at 50 to 479 (NIHLLKGLNV…RLIKGSADRN (430 aa)). The disordered stretch occupies residues 473–512 (KGSADRNSPSPSSVASSDSGSTDEIQEDLEREADVEPMVS). Over residues 480–492 (SPSPSSVASSDSG) the composition is skewed to low complexity. Residues 496 to 512 (EIQEDLEREADVEPMVS) are compositionally biased toward acidic residues.

Belongs to the intermediate filament family.

This Mus musculus (Mouse) protein is Intermediate filament family orphan 2 (Iffo2).